The primary structure comprises 129 residues: Cytochrome c' (129 aa).

Heme c contacts are provided by R12, Q13, T69, E70, C119, C122, and H123.

In terms of processing, binds 1 heme c group covalently per subunit.

Functionally, cytochrome c' is the most widely occurring bacterial c-type cytochrome. Cytochromes c' are high-spin proteins and the heme has no sixth ligand. Their exact function is not known. This chain is Cytochrome c', found in Rubrivivax gelatinosus (Rhodocyclus gelatinosus).